A 239-amino-acid chain; its full sequence is MNTIVFVEDDAEVGSLIAAYLAKHDMQVTVEPRGDQAEETILRENPDLVLLDIMLPGKDGMTICRDLRAKWSGPIVLLTSLDSDMNHILALEMGACDYILKTTPPAVLLARLRLHLRQNEQATLTKGLQETSLTPYKALHFGTLTIDPINRVVTLANTEISLSTADFELLWELATHAGQIMDRDALLKNLRGVSYDGLDRSVDVAISRLRKKLLDNAAEPYRIKTVRNKGYLFAPHAWE.

The region spanning 3 to 116 is the Response regulatory domain; the sequence is TIVFVEDDAE…VLLARLRLHL (114 aa). At aspartate 52 the chain carries 4-aspartylphosphate. The ompR/PhoB-type DNA-binding region spans 136–235; that stretch reads YKALHFGTLT…VRNKGYLFAP (100 aa).

Post-translationally, phosphorylated by RstB.

The protein localises to the cytoplasm. Its function is as follows. Member of the two-component regulatory system RstB/RstA. This Escherichia coli (strain K12) protein is Transcriptional regulatory protein RstA (rstA).